A 125-amino-acid chain; its full sequence is Large ribosomal subunit protein bL12 (125 aa).

Belongs to the bacterial ribosomal protein bL12 family. In terms of assembly, homodimer. Part of the ribosomal stalk of the 50S ribosomal subunit. Forms a multimeric L10(L12)X complex, where L10 forms an elongated spine to which 2 to 4 L12 dimers bind in a sequential fashion. Binds GTP-bound translation factors.

Forms part of the ribosomal stalk which helps the ribosome interact with GTP-bound translation factors. Is thus essential for accurate translation. This chain is Large ribosomal subunit protein bL12, found in Rickettsia canadensis (strain McKiel).